A 701-amino-acid polypeptide reads, in one-letter code: Elongation factor G (701 aa).

The tr-type G domain maps to Ser8–Thr290. GTP-binding positions include Ala17 to Thr24, Asp88 to His92, and Asn142 to Asp145.

This sequence belongs to the TRAFAC class translation factor GTPase superfamily. Classic translation factor GTPase family. EF-G/EF-2 subfamily.

The protein localises to the cytoplasm. Catalyzes the GTP-dependent ribosomal translocation step during translation elongation. During this step, the ribosome changes from the pre-translocational (PRE) to the post-translocational (POST) state as the newly formed A-site-bound peptidyl-tRNA and P-site-bound deacylated tRNA move to the P and E sites, respectively. Catalyzes the coordinated movement of the two tRNA molecules, the mRNA and conformational changes in the ribosome. This Haemophilus ducreyi (strain 35000HP / ATCC 700724) protein is Elongation factor G.